The sequence spans 152 residues: TRAPP-associated protein TCA17 (152 aa).

It belongs to the TRAPP small subunits family. Sedlin subfamily. Interacts with the TRAPP II complex; TRAPP II subunits TRS33 and TRS65 are required for this interaction.

The protein resides in the golgi apparatus. Its subcellular location is the trans-Golgi network. Its function is as follows. Required, together with the TRAPP II subunit TRS33, for TRAPP II complex assembly or stability, and for proper Golgi localization of TRAPP and the Rab GTPase YPT31. The sequence is that of TRAPP-associated protein TCA17 (TCA17) from Saccharomyces cerevisiae (strain ATCC 204508 / S288c) (Baker's yeast).